Reading from the N-terminus, the 721-residue chain is Dipeptidyl-peptidase 5 (721 aa).

An N-terminal signal peptide occupies residues 1 to 18 (MGAFRWLSIAAAASTALA). Residues Asn-75, Asn-94, Asn-151, and Asn-254 are each glycosylated (N-linked (GlcNAc...) asparagine). The segment at 271–297 (ARPINGPDSPGTPKGIKGDSSSPVFSP) is disordered. N-linked (GlcNAc...) asparagine glycosylation is found at Asn-380 and Asn-450. Catalysis depends on Ser-560, which acts as the Charge relay system. Asn-607 carries an N-linked (GlcNAc...) asparagine glycan. Residues Asp-643 and His-675 each act as charge relay system in the active site.

The protein belongs to the peptidase S9C family. N-glycosylated. As to expression, expressed in mycelia and conidia.

It localises to the secreted. Its function is as follows. May be involved in metabolism of dipeptides or may affect host defense mechanisms. Has a substrate specificity limited to the hydrolysis of X-Ala, His-Ser, and Ser-Tyr dipeptides at a neutral pH optimum. The protein is Dipeptidyl-peptidase 5 of Aspergillus fumigatus (strain ATCC MYA-4609 / CBS 101355 / FGSC A1100 / Af293) (Neosartorya fumigata).